The chain runs to 340 residues: MLHTIGILIWIIIKILVIVVPLLISVAYLTYAERKVIGYIQVRIGPNRVGLKGLLQPFADLLKLITKEIIVPTRSNKYLFVIAPLFALVPSLVGWAVIPFQEGIVLANINAGVLYLFAMSSLGVYGVLIAGWASNSKYAMFGALRSTAQTVSYEIAMGFALVGVLLAAGSMNLTDIVNSQKGGMLHWWFIPLLPLFLVFWISGIAETNRAPFDLAEGESEIVAGFHVEYSGIGFALFFLSEYASMILISTVLAILFMGGWLSPFEGITFLDQIFFIVPGFVWLLLKISFFLFVYLWVRATFPRYRYDQLMRLGWKVLIPVTIVWLIVTALMVVAHVKPWF.

8 consecutive transmembrane segments (helical) span residues 4 to 24, 78 to 98, 113 to 133, 151 to 171, 184 to 204, 244 to 264, 273 to 293, and 316 to 336; these read TIGI…PLLI, YLFV…WAVI, VLYL…AGWA, VSYE…AGSM, MLHW…ISGI, SMIL…LSPF, IFFI…FLFV, and VLIP…VAHV.

It belongs to the complex I subunit 1 family. In terms of assembly, NDH-1 is composed of 14 different subunits. Subunits NuoA, H, J, K, L, M, N constitute the membrane sector of the complex.

It localises to the cell inner membrane. The catalysed reaction is a quinone + NADH + 5 H(+)(in) = a quinol + NAD(+) + 4 H(+)(out). NDH-1 shuttles electrons from NADH, via FMN and iron-sulfur (Fe-S) centers, to quinones in the respiratory chain. The immediate electron acceptor for the enzyme in this species is believed to be ubiquinone. Couples the redox reaction to proton translocation (for every two electrons transferred, four hydrogen ions are translocated across the cytoplasmic membrane), and thus conserves the redox energy in a proton gradient. This subunit may bind ubiquinone. This is NADH-quinone oxidoreductase subunit H from Legionella pneumophila subsp. pneumophila (strain Philadelphia 1 / ATCC 33152 / DSM 7513).